Consider the following 447-residue polypeptide: Methylenetetrahydrofolate--tRNA-(uracil-5-)-methyltransferase TrmFO (447 aa).

Gly9 to Gly14 provides a ligand contact to FAD.

This sequence belongs to the MnmG family. TrmFO subfamily. FAD serves as cofactor.

The protein resides in the cytoplasm. It carries out the reaction uridine(54) in tRNA + (6R)-5,10-methylene-5,6,7,8-tetrahydrofolate + NADH + H(+) = 5-methyluridine(54) in tRNA + (6S)-5,6,7,8-tetrahydrofolate + NAD(+). The enzyme catalyses uridine(54) in tRNA + (6R)-5,10-methylene-5,6,7,8-tetrahydrofolate + NADPH + H(+) = 5-methyluridine(54) in tRNA + (6S)-5,6,7,8-tetrahydrofolate + NADP(+). Catalyzes the folate-dependent formation of 5-methyl-uridine at position 54 (M-5-U54) in all tRNAs. This chain is Methylenetetrahydrofolate--tRNA-(uracil-5-)-methyltransferase TrmFO, found in Paramagnetospirillum magneticum (strain ATCC 700264 / AMB-1) (Magnetospirillum magneticum).